The chain runs to 680 residues: Translation factor GUF1 homolog, chloroplastic (680 aa).

Residues 1-51 (MAAKINSLAALVSLQASHHHHXSTPFYFSPFSPHLSTTLTSRRRSLRSAVV) constitute a chloroplast transit peptide. The tr-type G domain occupies 83–264 (SNIRNFCIIA…AIVKRIPPPC (182 aa)). Residues 92–99 (AHIDHGKS), 157–161 (DTPGH), and 211–214 (NKID) each bind GTP.

Belongs to the TRAFAC class translation factor GTPase superfamily. Classic translation factor GTPase family. LepA subfamily.

The protein resides in the plastid. It localises to the chloroplast. It carries out the reaction GTP + H2O = GDP + phosphate + H(+). In terms of biological role, promotes chloroplast protein synthesis. May act as a fidelity factor of the translation reaction, by catalyzing a one-codon backward translocation of tRNAs on improperly translocated ribosomes. This chain is Translation factor GUF1 homolog, chloroplastic, found in Vitis vinifera (Grape).